The chain runs to 874 residues: uncharacterized protein (874 aa).

This is an uncharacterized protein from Ostreid herpesvirus 1 (isolate France) (OsHV-1).